A 393-amino-acid polypeptide reads, in one-letter code: S-adenosylmethionine synthase (393 aa).

His16 provides a ligand contact to ATP. Mg(2+) is bound at residue Asp18. Glu44 lines the K(+) pocket. Residues Glu57 and Gln100 each contribute to the L-methionine site. Residues 100-110 (QSNDIAQGVDH) form a flexible loop region. ATP is bound by residues 167–169 (DAK), 238–239 (RF), Asp247, 253–254 (RK), Ala270, and Lys274. An L-methionine-binding site is contributed by Asp247. Lys278 provides a ligand contact to L-methionine.

This sequence belongs to the AdoMet synthase family. Homotetramer; dimer of dimers. The cofactor is Mg(2+). K(+) serves as cofactor.

It localises to the cytoplasm. The enzyme catalyses L-methionine + ATP + H2O = S-adenosyl-L-methionine + phosphate + diphosphate. The protein operates within amino-acid biosynthesis; S-adenosyl-L-methionine biosynthesis; S-adenosyl-L-methionine from L-methionine: step 1/1. In terms of biological role, catalyzes the formation of S-adenosylmethionine (AdoMet) from methionine and ATP. The overall synthetic reaction is composed of two sequential steps, AdoMet formation and the subsequent tripolyphosphate hydrolysis which occurs prior to release of AdoMet from the enzyme. The chain is S-adenosylmethionine synthase from Albidiferax ferrireducens (strain ATCC BAA-621 / DSM 15236 / T118) (Rhodoferax ferrireducens).